A 51-amino-acid chain; its full sequence is Large ribosomal subunit protein eL39-like (51 aa).

The protein belongs to the eukaryotic ribosomal protein eL39 family. In terms of assembly, component of a male germ cell-specific 60S large ribosomal subunit (LSU), which contains RPL10L and RPL39L, instead of RPL10 and RPL39 paralogs. The composition of the rest of the complex is similar to classical ribosomes. Highly expressed in spermatocytes and spermatids. Highly expressed in embryonic stem cells.

The protein localises to the cytoplasm. Functionally, male germ cell-specific component of the ribosome, which is required for the formation of sperm and male fertility. Replaces the RPL39 paralog in the ribosome of male germ cells. The ribosome is a large ribonucleoprotein complex responsible for the synthesis of proteins in the cell. The male germ cell-specific ribosome displays a ribosomal polypeptide exit tunnel of distinct size and charge states compared with the classical ribosome. It is responsible for regulating the biosynthesis and folding of a subset of male germ-cell-specific proteins that are essential for the formation of sperm. The protein is Large ribosomal subunit protein eL39-like of Mus musculus (Mouse).